The chain runs to 388 residues: Processive diacylglycerol beta-glucosyltransferase (388 aa).

Belongs to the glycosyltransferase 28 family. UgtP subfamily.

Its subcellular location is the cell membrane. The catalysed reaction is a 1,2-diacyl-3-O-(beta-D-glucopyranosyl)-sn-glycerol + UDP-alpha-D-glucose = a 1,2-diacyl-3-O-(beta-D-Glc-(1-&gt;6)-beta-D-Glc)-sn-glycerol + UDP + H(+). The enzyme catalyses a 1,2-diacyl-3-O-(beta-D-Glc-(1-&gt;6)-beta-D-Glc)-sn-glycerol + UDP-alpha-D-glucose = a 1,2-diacyl-3-O-(beta-D-Glc-(1-&gt;6)-beta-D-Glc-(1-&gt;6)-beta-D-Glc)-sn-glycerol + UDP + H(+). It catalyses the reaction a 1,2-diacyl-sn-glycerol + UDP-alpha-D-glucose = a 1,2-diacyl-3-O-(beta-D-glucopyranosyl)-sn-glycerol + UDP + H(+). Its pathway is glycolipid metabolism; diglucosyl-diacylglycerol biosynthesis. Processive glucosyltransferase involved in the biosynthesis of both the bilayer- and non-bilayer-forming membrane glucolipids. Is able to successively transfer up to three glucosyl residues to diacylglycerol (DAG), thereby catalyzing the formation of beta-monoglucosyl-DAG (3-O-(beta-D-glucopyranosyl)-1,2-diacyl-sn-glycerol), beta-diglucosyl-DAG (3-O-(beta-D-glucopyranosyl-beta-(1-&gt;6)-D-glucopyranosyl)-1,2-diacyl-sn-glycerol) and beta-triglucosyl-DAG (3-O-(beta-D-glucopyranosyl-beta-(1-&gt;6)-D-glucopyranosyl-beta-(1-&gt;6)-D-glucopyranosyl)-1,2-diacyl-sn-glycerol). Beta-diglucosyl-DAG is the predominant glycolipid found in Bacillales and is also used as a membrane anchor for lipoteichoic acid (LTA). The sequence is that of Processive diacylglycerol beta-glucosyltransferase from Bacillus thuringiensis (strain Al Hakam).